A 140-amino-acid polypeptide reads, in one-letter code: uncharacterized protein (140 aa).

One can recognise an N-acetyltransferase domain in the interval 2–140; the sequence is KAVIAKNEEQ…GIPHLQMMKD (139 aa).

It belongs to the acetyltransferase family.

This is an uncharacterized protein from Bacillus subtilis (strain 168).